A 578-amino-acid chain; its full sequence is Acyl-CoA ligase AKT1 (578 aa).

Residues 210–218 (SSGTSGAQK), 350–355 (QCYGAT), Asp438, Arg457, and Lys554 contribute to the ATP site. The tract at residues 281–350 (DVEDLLSIVE…RHHPTWKTKQ (70 aa)) is SBD1. Residues 351-413 (CYGATEAGTA…VSSPSLAIGY (63 aa)) form an SBD2 region. Residues 576–578 (SKI) carry the Peroxisomal targeting signal type 1 motif.

The protein resides in the peroxisome. The protein operates within mycotoxin biosynthesis. Its function is as follows. Acyl-CoA ligase; part of the gene clusters that mediate the biosynthesis of the host-selective toxins (HSTs) AK-toxins responsible for Japanese pear black spot disease by the Japanese pear pathotype. AK-toxins are esters of 9,10-epoxy 8-hydroxy 9-methyldecatrienoic acid (EDA). On cellular level, AK-toxins affect plasma membrane of susceptible cells and cause a sudden increase in loss of K(+) after a few minutes of toxin treatment. The acyl-CoA ligase AKT1, the hydrolase AKT2 and enoyl-CoA hydratase AKT3 are all involved in the biosynthesis of the AK-, AF- and ACT-toxin common 9,10-epoxy-8-hydroxy-9-methyl-decatrienoic acid (EDA) structural moiety. Part of the EDA biosynthesis occurs in the peroxisome since these 3 enzymes are localized in peroxisomes. The exact roles of the 3 enzymes, as well as of additional AK-toxin clusters enzymes, including AKT4, AKT6 and AKTS1, have still to be elucidated. The Cytochrome P450 monooxygenase AKT7 on the other side functions to limit production of EDA and AK-toxin, probably via the catalysis of a side reaction of EDA or its precursor. This chain is Acyl-CoA ligase AKT1, found in Alternaria alternata (Alternaria rot fungus).